Here is a 529-residue protein sequence, read N- to C-terminus: Bifunctional purine biosynthesis protein PurH (529 aa).

One can recognise an MGS-like domain in the interval 2 to 149 (TNLVPVGRAL…KNHRFVNVVT (148 aa)).

Belongs to the PurH family.

It catalyses the reaction (6R)-10-formyltetrahydrofolate + 5-amino-1-(5-phospho-beta-D-ribosyl)imidazole-4-carboxamide = 5-formamido-1-(5-phospho-D-ribosyl)imidazole-4-carboxamide + (6S)-5,6,7,8-tetrahydrofolate. The enzyme catalyses IMP + H2O = 5-formamido-1-(5-phospho-D-ribosyl)imidazole-4-carboxamide. It functions in the pathway purine metabolism; IMP biosynthesis via de novo pathway; 5-formamido-1-(5-phospho-D-ribosyl)imidazole-4-carboxamide from 5-amino-1-(5-phospho-D-ribosyl)imidazole-4-carboxamide (10-formyl THF route): step 1/1. It participates in purine metabolism; IMP biosynthesis via de novo pathway; IMP from 5-formamido-1-(5-phospho-D-ribosyl)imidazole-4-carboxamide: step 1/1. The sequence is that of Bifunctional purine biosynthesis protein PurH from Cereibacter sphaeroides (strain ATCC 17025 / ATH 2.4.3) (Rhodobacter sphaeroides).